Consider the following 433-residue polypeptide: Putative ankyrin repeat protein R578 (433 aa).

4 ANK repeats span residues 166–195 (NKEI…ILSE), 197–224 (DHLI…LSKL), 356–386 (VNPN…DIHS), and 388–415 (PSLI…ICDE).

The polypeptide is Putative ankyrin repeat protein R578 (Acanthamoeba polyphaga mimivirus (APMV)).